A 538-amino-acid polypeptide reads, in one-letter code: Putative cysteine ligase BshC (538 aa).

A coiled-coil region spans residues 248–268 (ISKYKEVQEGLRNQQEVIKEL).

Belongs to the BshC family.

In terms of biological role, involved in bacillithiol (BSH) biosynthesis. May catalyze the last step of the pathway, the addition of cysteine to glucosamine malate (GlcN-Mal) to generate BSH. This Bacillus cereus (strain ATCC 14579 / DSM 31 / CCUG 7414 / JCM 2152 / NBRC 15305 / NCIMB 9373 / NCTC 2599 / NRRL B-3711) protein is Putative cysteine ligase BshC.